The primary structure comprises 514 residues: Antiseptic resistance protein (514 aa).

Topologically, residues 1–23 (MISFFTKTTDMMTSKKRWTALVV) are cytoplasmic. The helical transmembrane segment at 24-41 (LAVSLFVVTMDMTILIMA) threads the bilayer. Residues 42–57 (LPELVRELEPSGTQQL) are Extracellular-facing. The helical transmembrane segment at 58 to 75 (WIVDIYSLVLAGFIIPLS) threads the bilayer. Residues 76-86 (AFADKWGRKKA) are Cytoplasmic-facing. Residues 87-104 (LLTGFALFGLVSLAIFFA) traverse the membrane as a helical segment. The Extracellular segment spans residues 105-112 (ESAEFVIA). Residues 113 to 130 (IRFLLGIAGALIMPTTLS) form a helical membrane-spanning segment. The Cytoplasmic portion of the chain corresponds to 131 to 146 (MIRVIFENPKERATAL). A helical membrane pass occupies residues 147 to 164 (AVWSIASSIGAVFGPIIG). The Extracellular segment spans residues 165–172 (GALLEQFS). A helical transmembrane segment spans residues 173–190 (WHSAFLINVPFAIIAVVA). Residues 191–207 (GLFLLPESKLSKEKSHS) lie on the Cytoplasmic side of the membrane. A helical transmembrane segment spans residues 208–225 (WDIPSTILSIAGMIGLVW). Residues 226-237 (SIKEFSKEGLAD) are Extracellular-facing. The chain crosses the membrane as a helical span at residues 238 to 255 (IIPWVVIVLAITMIVIFV). The Cytoplasmic segment spans residues 256–278 (KRNLSSSDPMLDVRLFKKRSFSA). The chain crosses the membrane as a helical span at residues 279 to 295 (GTIAAFMTMFAMASVLL). Topologically, residues 296–315 (LASQWLQVVEELSPFKAGLY) are extracellular. The chain crosses the membrane as a helical span at residues 316 to 333 (LLPMAIGDMVFAPIAPGL). Topologically, residues 334–341 (AARFGPKI) are cytoplasmic. The helical transmembrane segment at 342-360 (VLPSGIGIAAIGMFIMYFF) threads the bilayer. Over 361–369 (GHPLSYSTM) the chain is Extracellular. A helical transmembrane segment spans residues 370–387 (ALALILVGAGMASLAVAS). The Cytoplasmic segment spans residues 388-408 (ALIMLETPTSKAGNAAAVEES). Residues 409-426 (MYDLGNVFGVAVLGSLSS) form a helical membrane-spanning segment. The Extracellular portion of the chain corresponds to 427–481 (MLYRVFLDISSFSSKGIVGDLAHVAEESVVGAVEVAKATGIKQLANEAVTSFNDA). Residues 482–499 (FVATALVGGIIMIIISIV) form a helical membrane-spanning segment. The Cytoplasmic portion of the chain corresponds to 500–514 (VYLLIPKSLDITKQK).

This sequence belongs to the major facilitator superfamily.

Its subcellular location is the cell membrane. In terms of biological role, confers export-mediated resistance against antiseptic and disinfectant compounds such as intercalating dyes, quaternary ammonium salts and diamidines. The chain is Antiseptic resistance protein (qacA) from Staphylococcus aureus (strain Mu50 / ATCC 700699).